We begin with the raw amino-acid sequence, 464 residues long: Argininosuccinate lyase (464 aa).

This sequence belongs to the lyase 1 family. Argininosuccinate lyase subfamily.

It is found in the cytoplasm. It catalyses the reaction 2-(N(omega)-L-arginino)succinate = fumarate + L-arginine. The protein operates within amino-acid biosynthesis; L-arginine biosynthesis; L-arginine from L-ornithine and carbamoyl phosphate: step 3/3. The sequence is that of Argininosuccinate lyase from Desulfotalea psychrophila (strain LSv54 / DSM 12343).